Reading from the N-terminus, the 751-residue chain is Large T antigen (751 aa).

Methionine 1 is modified (N-acetylmethionine; by host). The region spanning 12-75 (ALISLLDLEP…LYRVRLLLGP (64 aa)) is the J domain. The interval 130–134 (LTCQE) is binding to host RB1 protein and transforming activity. The segment covering 133-143 (QEELSSSEDEF) has biased composition (acidic residues). A disordered region spans residues 133–260 (QEELSSSEDE…PKKPPPTVSP (128 aa)). Positions 155–165 (VSISSDSSSSS) are enriched in low complexity. Polar residues predominate over residues 219 to 232 (RESQSTFGSYFNST). Serine 245 is subject to Phosphoserine; by host. Threonine 249 carries the phosphothreonine; by host modification. The Nuclear localization signal motif lies at 251-257 (PKKPPPT). Residues 264 to 380 (PTILRGFLSH…KENKPGLYHF (117 aa)) constitute a DNA-binding region (T-ag OBD). The segment at 389–483 (VKQIDWNFLT…RRLKVLESTR (95 aa)) adopts a T-ag D1-type zinc-finger fold. Zn(2+) is bound by residues cysteine 426, cysteine 429, histidine 439, and histidine 443. Positions 522–682 (DFEMMLLDIL…DFLAKSLEEN (161 aa)) constitute an SF3 helicase domain. Position 548–555 (548–555 (GPVNSGKT)) interacts with ATP.

Forms homohexamers in the presence of ATP. Interacts with host HDAC1. Interacts (via LXCXE domain) with host RB1; the interaction induces the aberrant dissociation of RB1-E2F1 complex thereby disrupting RB1's activity. Interacts (via LXCXE domain) with host pRB-related proteins RBL1 and RBL2. Interacts (via C-terminus) with host TOP1 and POLA1 allowing DNA replication. Interacts with host preinitiation complex components TBP, TFIIA and TFIID to regulate transcription initiation. Requires Mg(2+) as cofactor. Phosphorylated on both serine and threonine residues. Small t antigen inhibits the dephosphorylation by the AC form of PP2A. In terms of processing, O-Glycosylated near the C-terminal region. Post-translationally, acetylated by CBP in a TP53-dependent manner.

It is found in the host nucleus. It catalyses the reaction Couples ATP hydrolysis with the unwinding of duplex DNA by translocating in the 3'-5' direction.. The enzyme catalyses ATP + H2O = ADP + phosphate + H(+). Isoform large T antigen is a key early protein essential for both driving viral replication and inducing cellular transformation. Plays a role in viral genome replication by driving entry of quiescent cells into the cell cycle and by autoregulating the synthesis of viral early mRNA. Displays highly oncogenic activities by corrupting the host cellular checkpoint mechanisms that guard cell division and the transcription, replication, and repair of DNA. Participates in the modulation of cellular gene expression preceeding viral DNA replication. This step involves binding to host key cell cycle regulators retinoblastoma protein RB1/pRb and TP53. Induces the disassembly of host E2F1 transcription factors from RB1, thus promoting transcriptional activation of E2F1-regulated S-phase genes. Inhibits host TP53 binding to DNA, abrogating the ability of TP53 to stimulate gene expression. Plays the role of a TFIID-associated factor (TAF) in transcription initiation for all three RNA polymerases, by stabilizing the TBP-TFIIA complex on promoters. Initiates viral DNA replication and unwinding via interactions with the viral origin of replication. Binds two adjacent sites in the SV40 origin. The replication fork movement is facilitated by Large T antigen helicase activity. Has processive 3'-5' DNA helicase activity which requires a short 3' single-stranded region and ATP. Activates the transcription of viral late mRNA, through host TBP and TFIIA stabilization. Interferes with histone deacetylation mediated by HDAC1, leading to activation of transcription. The sequence is that of Large T antigen from Mesocricetus auratus (Golden hamster).